The following is a 151-amino-acid chain: Ribosome maturation factor RimP (151 aa).

It belongs to the RimP family.

The protein localises to the cytoplasm. Functionally, required for maturation of 30S ribosomal subunits. In Shewanella denitrificans (strain OS217 / ATCC BAA-1090 / DSM 15013), this protein is Ribosome maturation factor RimP.